Reading from the N-terminus, the 732-residue chain is MAP7 domain-containing protein 2 (732 aa).

Met1 carries the post-translational modification N-acetylmethionine. Gly residues predominate over residues 1–10 (MERGGGGSGT). Disordered stretches follow at residues 1-64 (MERG…RREE), 95-123 (WRKLEEQRQREDQKRAAVEEKRKQKLREE), 157-186 (PGGHDACDKLSTSTMSLPKPTEPPMNKRLS), 210-244 (GPLNPSYKSSPTRNIEKKKATSTSTSGAGDVGKEA), and 279-509 (EFSG…KQKE). Residues 49-64 (LKSDERQRLAKERREE) show a composition bias toward basic and acidic residues. Residues 51–146 (SDERQRLAKE…RTQQLELKKK (96 aa)) adopt a coiled-coil conformation. The segment covering 329–345 (MPKRKAEKEKSNKEREG) has biased composition (basic and acidic residues). The segment covering 347 to 357 (LAQQAAGPQGE) has biased composition (low complexity). Residues 359-374 (ALEKHVVDKHASEKHA) are compositionally biased toward basic and acidic residues. The segment covering 375-386 (AAAGGKAENSAA) has biased composition (low complexity). Basic and acidic residues predominate over residues 404-509 (LAEKRRQARL…EKAMIEKQKE (106 aa)).

The protein belongs to the MAP7 family. Interacts (via N-terminus) with microtubules; facilitates microtubule stabilization. Interacts with kinesin-1 family members, KIF5A, KIF5B and KIF5C.

The protein localises to the cytoplasm. It is found in the cytoskeleton. Its subcellular location is the microtubule organizing center. It localises to the centrosome. The protein resides in the midbody. The protein localises to the cell projection. It is found in the neuron projection. Its subcellular location is the axon. Functionally, microtubule-stabilizing protein that plays a role in the control of cell motility and neurite outgrowth via direct binding to the microtubule. Acts as a critical cofactor for kinesin transport. In the proximal axon, regulates kinesin-1 family members, KIF5A, KIF5B and KIF5C recruitment to microtubules and contributes to kinesin-1-mediated transport in the axons. This Homo sapiens (Human) protein is MAP7 domain-containing protein 2 (MAP7D2).